Here is a 760-residue protein sequence, read N- to C-terminus: Molybdenum cofactor sulfurase 2 (760 aa).

Lys-223 is modified (N6-(pyridoxal phosphate)lysine). Residue Cys-389 is part of the active site. An MOSC domain is found at 608–758 (QSDDEARTLR…LHCGSPLQVV (151 aa)).

It belongs to the class-V pyridoxal-phosphate-dependent aminotransferase family. MOCOS subfamily. It depends on pyridoxal 5'-phosphate as a cofactor.

The enzyme catalyses Mo-molybdopterin + L-cysteine + AH2 = thio-Mo-molybdopterin + L-alanine + A + H2O. Sulfurates the molybdenum cofactor. Sulfation of molybdenum is essential for xanthine dehydrogenase (XDH) and aldehyde oxidase (ADO) enzymes in which molybdenum cofactor is liganded by 1 oxygen and 1 sulfur atom in active form. The chain is Molybdenum cofactor sulfurase 2 from Culex quinquefasciatus (Southern house mosquito).